The chain runs to 182 residues: Small ribosomal subunit protein uS9 (182 aa).

It belongs to the universal ribosomal protein uS9 family.

This is Small ribosomal subunit protein uS9 from Corynebacterium efficiens (strain DSM 44549 / YS-314 / AJ 12310 / JCM 11189 / NBRC 100395).